Consider the following 428-residue polypeptide: Homoserine dehydrogenase (428 aa).

NADPH-binding residues include phenylalanine 10, threonine 12, valine 13, arginine 44, and lysine 106. An NAD(+)-binding site is contributed by valine 13. NADP(+) contacts are provided by valine 13, arginine 44, and lysine 106. Glutamate 130, valine 133, glycine 135, and isoleucine 137 together coordinate Na(+). NADP(+) contacts are provided by glycine 188 and glutamate 191. L-homoserine is bound by residues glutamate 191 and aspartate 202. Lysine 206 (proton donor) is an active-site residue. Glycine 303 serves as a coordination point for NADPH. Residue glycine 303 participates in NAD(+) binding. NADP(+) is bound at residue glycine 303. Residues 351 to 425 (YFSVETPDST…DFKLLNYFKV (75 aa)) form the ACT domain.

The protein belongs to the homoserine dehydrogenase family. The cofactor is a metal cation.

It carries out the reaction L-homoserine + NADP(+) = L-aspartate 4-semialdehyde + NADPH + H(+). The catalysed reaction is L-homoserine + NAD(+) = L-aspartate 4-semialdehyde + NADH + H(+). The protein operates within amino-acid biosynthesis; L-methionine biosynthesis via de novo pathway; L-homoserine from L-aspartate: step 3/3. It participates in amino-acid biosynthesis; L-threonine biosynthesis; L-threonine from L-aspartate: step 3/5. Catalyzes the conversion of L-aspartate-beta-semialdehyde (L-Asa) to L-homoserine (L-Hse), the third step in the biosynthesis of threonine and methionine from aspartate. In Lactococcus lactis subsp. lactis (strain IL1403) (Streptococcus lactis), this protein is Homoserine dehydrogenase (hom).